The following is a 146-amino-acid chain: 3-hydroxyacyl-[acyl-carrier-protein] dehydratase FabZ (146 aa).

Histidine 48 is an active-site residue.

Belongs to the thioester dehydratase family. FabZ subfamily.

The protein resides in the cytoplasm. It carries out the reaction a (3R)-hydroxyacyl-[ACP] = a (2E)-enoyl-[ACP] + H2O. Its function is as follows. Involved in unsaturated fatty acids biosynthesis. Catalyzes the dehydration of short chain beta-hydroxyacyl-ACPs and long chain saturated and unsaturated beta-hydroxyacyl-ACPs. The polypeptide is 3-hydroxyacyl-[acyl-carrier-protein] dehydratase FabZ (Acetivibrio thermocellus (strain ATCC 27405 / DSM 1237 / JCM 9322 / NBRC 103400 / NCIMB 10682 / NRRL B-4536 / VPI 7372) (Clostridium thermocellum)).